The following is a 282-amino-acid chain: Biotin synthase (282 aa).

Residues 1-230 form the Radical SAM core domain; it reads MSDNKIYLCA…NQMLMIAGGR (230 aa). Positions 19, 23, and 26 each coordinate [4Fe-4S] cluster. [2Fe-2S] cluster-binding residues include C63, C98, and C156.

It belongs to the radical SAM superfamily. Biotin synthase family. As to quaternary structure, homodimer. Requires [4Fe-4S] cluster as cofactor. [2Fe-2S] cluster serves as cofactor.

It carries out the reaction (4R,5S)-dethiobiotin + (sulfur carrier)-SH + 2 reduced [2Fe-2S]-[ferredoxin] + 2 S-adenosyl-L-methionine = (sulfur carrier)-H + biotin + 2 5'-deoxyadenosine + 2 L-methionine + 2 oxidized [2Fe-2S]-[ferredoxin]. It functions in the pathway cofactor biosynthesis; biotin biosynthesis; biotin from 7,8-diaminononanoate: step 2/2. Its function is as follows. Catalyzes the conversion of dethiobiotin (DTB) to biotin by the insertion of a sulfur atom into dethiobiotin via a radical-based mechanism. The polypeptide is Biotin synthase (Aliarcobacter butzleri (strain RM4018) (Arcobacter butzleri)).